The primary structure comprises 320 residues: Protein TsetseEP (320 aa).

An N-terminal signal peptide occupies residues 1–19; it reads MKFFISFAFLCLVLSCVAA. The interval 192-320 is disordered; sequence GLPEPEPEPE…ESKPNSLFNF (129 aa). Positions 194–308 are enriched in acidic residues; the sequence is PEPEPEPEPE…EPEPEPEPQP (115 aa). The tract at residues 194-311 is 59 X 2 AA tandem repeats of P-E; it reads PEPEPEPEPE…PEPEPQPEPE (118 aa).

In terms of tissue distribution, expressed in the gut, but not salivary glands, of female and male flies (at protein level). Present in vesicles in midgut cells and in the lumen of the gut.

It localises to the secreted. The protein is Protein TsetseEP of Glossina morsitans morsitans (Savannah tsetse fly).